Here is a 149-residue protein sequence, read N- to C-terminus: Secreted RxLR effector protein 47 (149 aa).

Positions 1 to 22 (MICLLPLIAVMLFVFATHTVLA) are cleaved as a signal peptide. The RxLR-dEER motif lies at 57–79 (RFLRQETTFEEKPSVNDVHAEER).

This sequence belongs to the RxLR effector family.

It localises to the secreted. It is found in the host membrane. Its function is as follows. Secreted effector that completely suppresses the host cell death induced by cell death-inducing proteins. The protein is Secreted RxLR effector protein 47 of Plasmopara viticola (Downy mildew of grapevine).